Consider the following 448-residue polypeptide: Homogentisate 1,2-dioxygenase (448 aa).

His302 acts as the Proton acceptor in catalysis. Residues His345 and Glu351 each contribute to the Fe cation site. Homogentisate-binding residues include Tyr360 and His381. His381 serves as a coordination point for Fe cation.

This sequence belongs to the homogentisate dioxygenase family. In terms of assembly, hexamer; dimer of trimers. Requires Fe cation as cofactor.

The enzyme catalyses homogentisate + O2 = 4-maleylacetoacetate + H(+). The protein operates within amino-acid degradation; L-phenylalanine degradation; acetoacetate and fumarate from L-phenylalanine: step 4/6. Involved in the catabolism of homogentisate (2,5-dihydroxyphenylacetate or 2,5-OH-PhAc), a central intermediate in the degradation of phenylalanine and tyrosine. Catalyzes the oxidative ring cleavage of the aromatic ring of homogentisate to yield maleylacetoacetate. The chain is Homogentisate 1,2-dioxygenase from Ralstonia pickettii (strain 12J).